The following is a 55-amino-acid chain: Large ribosomal subunit protein bL33 (55 aa).

It belongs to the bacterial ribosomal protein bL33 family.

This chain is Large ribosomal subunit protein bL33, found in Xanthomonas oryzae pv. oryzae (strain PXO99A).